The chain runs to 182 residues: Transmembrane and coiled-coil domain-containing protein 2 (182 aa).

The helical transmembrane segment at 51–71 (VQIILRISFLILLGIGIYALW) threads the bilayer. Residues 124–151 (GLQEKILKKLKTVENKMKNLEGIIVAQK) adopt a coiled-coil conformation.

The protein resides in the membrane. The chain is Transmembrane and coiled-coil domain-containing protein 2 (TMCO2) from Homo sapiens (Human).